Reading from the N-terminus, the 381-residue chain is Transcription termination factor 4, mitochondrial (381 aa).

A mitochondrion-targeting transit peptide spans 1 to 42 (MAAFGRQVLDWHRLIPLTWACMARQTPHLGEQRRTTASLLRK). MTERF repeat units follow at residues 142-172 (CVVL…LGLG), 177-204 (KRVL…LKEK), 209-239 (VQQV…YAYF), 245-270 (HPDI…YLER), and 290-318 (LKDI…VFKK). Positions 310–327 (VEEFQVFKKLLAREEEES) are dimerization with NSUN4. Positions 322-381 (REEEESESSTSDDKRASLDEDEDDDDEEDNDEDDNDEDDDDEDDDEAEDNDEDEDDDEEE) are disordered. Residues 340–381 (DEDEDDDDEEDNDEDDNDEDDDDEDDDEAEDNDEDEDDDEEE) are compositionally biased toward acidic residues.

It belongs to the mTERF family. As to quaternary structure, heterodimer with NSUN4; this interaction may be required for NSUN4 recruitment to the mitochondrial large ribosomal subunit. Post-translationally, the mature mitochondrial protein exists in 2 forms differing at the level of their N-terminus, one is starting at residue 43 and the other at residue 48.

It localises to the mitochondrion. Its function is as follows. Regulator of mitochondrial ribosome biogenesis and translation. Binds to mitochondrial ribosomal RNAs 16S, 12S and 7S and targets NSUN4 RNA methyltransferase to the mitochondrial large ribosomal subunit (39S). The chain is Transcription termination factor 4, mitochondrial (MTERF4) from Homo sapiens (Human).